Reading from the N-terminus, the 443-residue chain is Phosphoglucosamine mutase (443 aa).

Serine 101 acts as the Phosphoserine intermediate in catalysis. 4 residues coordinate Mg(2+): serine 101, aspartate 239, aspartate 241, and aspartate 243. Serine 101 bears the Phosphoserine mark.

The protein belongs to the phosphohexose mutase family. Requires Mg(2+) as cofactor. In terms of processing, activated by phosphorylation.

It carries out the reaction alpha-D-glucosamine 1-phosphate = D-glucosamine 6-phosphate. Catalyzes the conversion of glucosamine-6-phosphate to glucosamine-1-phosphate. In Francisella tularensis subsp. tularensis (strain WY96-3418), this protein is Phosphoglucosamine mutase.